Here is a 196-residue protein sequence, read N- to C-terminus: Golgi to ER traffic protein 1 (196 aa).

The Lumenal portion of the chain corresponds to 1–10 (MFLDLHPYTI). The helical transmembrane segment at 11-30 (LVSIFIILLVKQIVGRIGKS) threads the bilayer. Over 31–114 (TIQEFVWLLY…SIDKLANVLL (84 aa)) the chain is Cytoplasmic. The stretch at 76 to 114 (AKWTKLNRQADKLTSEIQKLNEEIRQSKASIDKLANVLL) forms a coiled coil. Residues 115–135 (MVLTTLPIWVARIFFRKTHLF) traverse the membrane as a helical segment. Topologically, residues 136–159 (YLRSGIFPRYIEWVLALPFFPSGA) are lumenal. The helical transmembrane segment at 160-176 (VGLTVWMFAANSVIHNV) threads the bilayer. Topologically, residues 177-196 (ISLVSFAFEKRVEKPVRQKK) are cytoplasmic.

This sequence belongs to the WRB/GET1 family. Component of the Golgi to ER traffic (GET) complex, which is composed of GET1, GET2 and GET3. Within the complex, GET1 and GET2 form a heterotetramer which is stabilized by phosphatidylinositol binding and which binds to the GET3 homodimer.

It localises to the endoplasmic reticulum membrane. The protein resides in the golgi apparatus membrane. In terms of biological role, required for the post-translational delivery of tail-anchored (TA) proteins to the endoplasmic reticulum. Together with GET2, acts as a membrane receptor for soluble GET3, which recognizes and selectively binds the transmembrane domain of TA proteins in the cytosol. The GET complex cooperates with the HDEL receptor ERD2 to mediate the ATP-dependent retrieval of resident ER proteins that contain a C-terminal H-D-E-L retention signal from the Golgi to the ER. This chain is Golgi to ER traffic protein 1, found in Candida tropicalis (strain ATCC MYA-3404 / T1) (Yeast).